Here is a 69-residue protein sequence, read N- to C-terminus: DNA gyrase inhibitor YacG (69 aa).

Residues Cys-14, Cys-17, Cys-33, and Cys-37 each coordinate Zn(2+). The disordered stretch occupies residues 46-69 (ADEEKSIPGAPDMSDSDGWSEDQY). The segment covering 59 to 69 (SDSDGWSEDQY) has biased composition (acidic residues).

This sequence belongs to the DNA gyrase inhibitor YacG family. As to quaternary structure, interacts with GyrB. Requires Zn(2+) as cofactor.

Functionally, inhibits all the catalytic activities of DNA gyrase by preventing its interaction with DNA. Acts by binding directly to the C-terminal domain of GyrB, which probably disrupts DNA binding by the gyrase. The chain is DNA gyrase inhibitor YacG from Aliivibrio fischeri (strain MJ11) (Vibrio fischeri).